The primary structure comprises 137 residues: Small ribosomal subunit protein uS12 (137 aa).

Asp89 is subject to 3-methylthioaspartic acid. A disordered region spans residues 104 to 137 (TAGVNGRKQSRSKYGAKRPKPGQAAAAPAKGKKK). Residues 111–123 (KQSRSKYGAKRPK) are compositionally biased toward basic residues. Over residues 124-137 (PGQAAAAPAKGKKK) the composition is skewed to low complexity.

Belongs to the universal ribosomal protein uS12 family. As to quaternary structure, part of the 30S ribosomal subunit. Contacts proteins S8 and S17. May interact with IF1 in the 30S initiation complex.

Functionally, with S4 and S5 plays an important role in translational accuracy. Interacts with and stabilizes bases of the 16S rRNA that are involved in tRNA selection in the A site and with the mRNA backbone. Located at the interface of the 30S and 50S subunits, it traverses the body of the 30S subunit contacting proteins on the other side and probably holding the rRNA structure together. The combined cluster of proteins S8, S12 and S17 appears to hold together the shoulder and platform of the 30S subunit. In Cytophaga hutchinsonii (strain ATCC 33406 / DSM 1761 / CIP 103989 / NBRC 15051 / NCIMB 9469 / D465), this protein is Small ribosomal subunit protein uS12.